The following is a 177-amino-acid chain: Adenine phosphoribosyltransferase (177 aa).

Belongs to the purine/pyrimidine phosphoribosyltransferase family. As to quaternary structure, homodimer.

Its subcellular location is the cytoplasm. It carries out the reaction AMP + diphosphate = 5-phospho-alpha-D-ribose 1-diphosphate + adenine. It functions in the pathway purine metabolism; AMP biosynthesis via salvage pathway; AMP from adenine: step 1/1. In terms of biological role, catalyzes a salvage reaction resulting in the formation of AMP, that is energically less costly than de novo synthesis. The sequence is that of Adenine phosphoribosyltransferase from Leptospira interrogans serogroup Icterohaemorrhagiae serovar copenhageni (strain Fiocruz L1-130).